We begin with the raw amino-acid sequence, 332 residues long: tRNA uridine(34) hydroxylase (332 aa).

One can recognise a Rhodanese domain in the interval 127 to 221 (SDPETVLIDT…YLEEVPKEKS (95 aa)). The active-site Cysteine persulfide intermediate is the Cys-181. Residues 308–332 (AKKLAQLNKQKKQQAKEAARKKAQQ) form a disordered region. Positions 321-332 (QAKEAARKKAQQ) are enriched in basic and acidic residues.

This sequence belongs to the TrhO family.

The catalysed reaction is uridine(34) in tRNA + AH2 + O2 = 5-hydroxyuridine(34) in tRNA + A + H2O. Functionally, catalyzes oxygen-dependent 5-hydroxyuridine (ho5U) modification at position 34 in tRNAs. The sequence is that of tRNA uridine(34) hydroxylase from Francisella tularensis subsp. tularensis (strain FSC 198).